A 77-amino-acid polypeptide reads, in one-letter code: Acyl carrier protein (77 aa).

Positions 2–77 (SEKLQKIQAL…DAVAYIEERS (76 aa)) constitute a Carrier domain. Ser37 carries the O-(pantetheine 4'-phosphoryl)serine modification.

The protein belongs to the acyl carrier protein (ACP) family. In terms of processing, 4'-phosphopantetheine is transferred from CoA to a specific serine of apo-ACP by AcpS. This modification is essential for activity because fatty acids are bound in thioester linkage to the sulfhydryl of the prosthetic group.

The protein localises to the cytoplasm. It participates in lipid metabolism; fatty acid biosynthesis. Functionally, carrier of the growing fatty acid chain in fatty acid biosynthesis. The chain is Acyl carrier protein from Desulforudis audaxviator (strain MP104C).